A 167-amino-acid chain; its full sequence is G/U mismatch-specific DNA glycosylase (167 aa).

Belongs to the uracil-DNA glycosylase (UDG) superfamily. TDG/mug family. As to quaternary structure, binds DNA as a monomer.

The protein localises to the cytoplasm. The catalysed reaction is Specifically hydrolyzes mismatched double-stranded DNA and polynucleotides, releasing free uracil.. Excises ethenocytosine and uracil, which can arise by alkylation or deamination of cytosine, respectively, from the corresponding mispairs with guanine in ds-DNA. It is capable of hydrolyzing the carbon-nitrogen bond between the sugar-phosphate backbone of the DNA and the mispaired base. The complementary strand guanine functions in substrate recognition. Required for DNA damage lesion repair in stationary-phase cells. The chain is G/U mismatch-specific DNA glycosylase from Pectobacterium atrosepticum (strain SCRI 1043 / ATCC BAA-672) (Erwinia carotovora subsp. atroseptica).